The primary structure comprises 291 residues: Transcription factor bHLH53 (291 aa).

Residues 163–212 (PTLSSQSIAARGRRRRIAEKTHELGKLIPGGNKLNTAEMFQAAAKYVKFL) form the bHLH domain.

Homodimer. In terms of tissue distribution, expressed constitutively in roots, leaves, stems, and flowers.

It is found in the nucleus. In Arabidopsis thaliana (Mouse-ear cress), this protein is Transcription factor bHLH53 (BHLH53).